The primary structure comprises 59 residues: Phycobilisome degradation protein NblA (59 aa).

To chloroplast ycf18.

In terms of biological role, involved in phycobilisome (PBS) degradation during nutrient deprivation. May mark the PBS for degradation by covalent association with PBS components or may disrupt the PBS via ionic interactions. This chain is Phycobilisome degradation protein NblA, found in Synechococcus elongatus (strain ATCC 33912 / PCC 7942 / FACHB-805) (Anacystis nidulans R2).